Reading from the N-terminus, the 302-residue chain is MFFRNLTLFRFPTSLDFSQIDSILPNARLRPVGPLEMTSRGFISPFGREEQEVLNQRQGDFLWLTVGSEDKILPASVVNDLLTRKCSEIEEKKGHPPGGRERKRIKDDLIHELLPRAFVKNSRIDAMLDLRYGYVAVDTASRKAAETVISEIRDLLGSFPALPLNAEISIRSMLTSWIAGEPLPEHLNLGDECEMKDATEGGAIIKCQHQALRCEEIDKHLEVGKQVSKLALILDDHVSFVLGDDLVIRKLKFLDGMLDQLEHSDTDGIRAELDARFALMSAEIRRLFLLLEVPLKLSKANN.

It belongs to the RdgC family.

It is found in the cytoplasm. The protein localises to the nucleoid. May be involved in recombination. In Xylella fastidiosa (strain M23), this protein is Recombination-associated protein RdgC.